The chain runs to 493 residues: 3-octaprenyl-4-hydroxybenzoate carboxy-lyase (493 aa).

Position 172 (Asn172) interacts with Mn(2+). Prenylated FMN-binding positions include 175–177, 189–191, and 194–195; these read IYR, RWL, and RG. A Mn(2+)-binding site is contributed by Glu238. Asp287 serves as the catalytic Proton donor.

This sequence belongs to the UbiD family. Homohexamer. It depends on prenylated FMN as a cofactor. Mn(2+) serves as cofactor.

The protein localises to the cell membrane. The enzyme catalyses a 4-hydroxy-3-(all-trans-polyprenyl)benzoate + H(+) = a 2-(all-trans-polyprenyl)phenol + CO2. Its pathway is cofactor biosynthesis; ubiquinone biosynthesis. Functionally, catalyzes the decarboxylation of 3-octaprenyl-4-hydroxy benzoate to 2-octaprenylphenol, an intermediate step in ubiquinone biosynthesis. This Shewanella sp. (strain MR-4) protein is 3-octaprenyl-4-hydroxybenzoate carboxy-lyase.